A 56-amino-acid chain; its full sequence is Small integral membrane protein 39 (56 aa).

The chain crosses the membrane as a helical span at residues 33 to 53; it reads VVVSAVLALLVLINVVLIFLL.

It localises to the membrane. The chain is Small integral membrane protein 39 from Homo sapiens (Human).